The chain runs to 387 residues: Pyrophosphate--fructose 6-phosphate 1-phosphotransferase 3 (387 aa).

Residue Gly15 coordinates diphosphate. Asp114 contacts Mg(2+). Residues 140 to 142 (TID), 186 to 188 (MGR), Glu247, and 308 to 311 (YELR) contribute to the substrate site. Asp142 serves as the catalytic Proton acceptor.

The protein belongs to the phosphofructokinase type A (PFKA) family. PPi-dependent PFK group II subfamily. Clade 'Short' sub-subfamily. In terms of assembly, homotetramer. The cofactor is Mg(2+).

The protein localises to the cytoplasm. It carries out the reaction beta-D-fructose 6-phosphate + diphosphate = beta-D-fructose 1,6-bisphosphate + phosphate + H(+). It participates in carbohydrate degradation; glycolysis; D-glyceraldehyde 3-phosphate and glycerone phosphate from D-glucose: step 3/4. Non-allosteric. In terms of biological role, catalyzes the phosphorylation of D-fructose 6-phosphate, the first committing step of glycolysis. Uses inorganic phosphate (PPi) as phosphoryl donor instead of ATP like common ATP-dependent phosphofructokinases (ATP-PFKs), which renders the reaction reversible, and can thus function both in glycolysis and gluconeogenesis. Consistently, PPi-PFK can replace the enzymes of both the forward (ATP-PFK) and reverse (fructose-bisphosphatase (FBPase)) reactions. The sequence is that of Pyrophosphate--fructose 6-phosphate 1-phosphotransferase 3 (pfk3) from Trichomonas vaginalis (strain ATCC PRA-98 / G3).